The sequence spans 472 residues: Aspartyl/glutamyl-tRNA(Asn/Gln) amidotransferase subunit B (472 aa).

This sequence belongs to the GatB/GatE family. GatB subfamily. As to quaternary structure, heterotrimer of A, B and C subunits.

It catalyses the reaction L-glutamyl-tRNA(Gln) + L-glutamine + ATP + H2O = L-glutaminyl-tRNA(Gln) + L-glutamate + ADP + phosphate + H(+). The enzyme catalyses L-aspartyl-tRNA(Asn) + L-glutamine + ATP + H2O = L-asparaginyl-tRNA(Asn) + L-glutamate + ADP + phosphate + 2 H(+). In terms of biological role, allows the formation of correctly charged Asn-tRNA(Asn) or Gln-tRNA(Gln) through the transamidation of misacylated Asp-tRNA(Asn) or Glu-tRNA(Gln) in organisms which lack either or both of asparaginyl-tRNA or glutaminyl-tRNA synthetases. The reaction takes place in the presence of glutamine and ATP through an activated phospho-Asp-tRNA(Asn) or phospho-Glu-tRNA(Gln). The sequence is that of Aspartyl/glutamyl-tRNA(Asn/Gln) amidotransferase subunit B from Campylobacter jejuni subsp. doylei (strain ATCC BAA-1458 / RM4099 / 269.97).